Here is a 142-residue protein sequence, read N- to C-terminus: ATP synthase epsilon chain (142 aa).

Belongs to the ATPase epsilon chain family. In terms of assembly, F-type ATPases have 2 components, CF(1) - the catalytic core - and CF(0) - the membrane proton channel. CF(1) has five subunits: alpha(3), beta(3), gamma(1), delta(1), epsilon(1). CF(0) has three main subunits: a, b and c.

It localises to the cell inner membrane. In terms of biological role, produces ATP from ADP in the presence of a proton gradient across the membrane. In Shewanella frigidimarina (strain NCIMB 400), this protein is ATP synthase epsilon chain.